Here is a 356-residue protein sequence, read N- to C-terminus: Trans-enoyl reductase pgmF (356 aa).

Residues V57–K60, S175–C178, S198–N201, Y216, V261–G262, and A342–K343 contribute to the NADP(+) site.

The protein belongs to the zinc-containing alcohol dehydrogenase family.

Functionally, FAD-linked oxidoreductase; part of the gene cluster that mediates the biosynthesis of pleosporalin A, ascomycone A, as well as a third cryptic naphthoquinone derived pigment, all responsible for the coloration of conidia. The pathway begins with the biosynthesis of the cyclized heptaketide 3-acetonyl-1,6,8-trihydroxy-2-naphthaldehyde by the NR-PKS pgmA. The C-6 hydroxyl group is further methylated by the O-methyltransferase pgmB to yield fusarubinaldehyde which is in turn oxidized by the cytochrome P450 monooxygenase pgmC at C-9. The C-1 hydroxyl group is then methylated spontaneously. Although pgmE, pgmD and pgmH are essential for the production of pleosporalin A, it is not the case for the 2 other final products and it remains difficult to assign a specific function to each enzyme. PgmF and pgmG seem not to be involved in pigment biosynthesis although they were regulated by the cluster-specific transcription factor pgmR. The chain is Trans-enoyl reductase pgmF from Aspergillus terreus.